The primary structure comprises 100 residues: Integration host factor subunit alpha (100 aa).

The tract at residues 50 to 70 (GNFQLRDKPQRPGRNPKTGEE) is disordered.

This sequence belongs to the bacterial histone-like protein family. In terms of assembly, heterodimer of an alpha and a beta chain.

Functionally, this protein is one of the two subunits of integration host factor, a specific DNA-binding protein that functions in genetic recombination as well as in transcriptional and translational control. This Chromobacterium violaceum (strain ATCC 12472 / DSM 30191 / JCM 1249 / CCUG 213 / NBRC 12614 / NCIMB 9131 / NCTC 9757 / MK) protein is Integration host factor subunit alpha.